We begin with the raw amino-acid sequence, 511 residues long: Maturase K (511 aa).

This sequence belongs to the intron maturase 2 family. MatK subfamily.

Its subcellular location is the plastid. It is found in the chloroplast. Its function is as follows. Usually encoded in the trnK tRNA gene intron. Probably assists in splicing its own and other chloroplast group II introns. This chain is Maturase K, found in Nardus stricta (Mat-grass).